The following is a 394-amino-acid chain: Exodeoxyribonuclease 7 large subunit (394 aa).

This sequence belongs to the XseA family. Heterooligomer composed of large and small subunits.

The protein resides in the cytoplasm. It catalyses the reaction Exonucleolytic cleavage in either 5'- to 3'- or 3'- to 5'-direction to yield nucleoside 5'-phosphates.. In terms of biological role, bidirectionally degrades single-stranded DNA into large acid-insoluble oligonucleotides, which are then degraded further into small acid-soluble oligonucleotides. The chain is Exodeoxyribonuclease 7 large subunit from Thermotoga maritima (strain ATCC 43589 / DSM 3109 / JCM 10099 / NBRC 100826 / MSB8).